Consider the following 165-residue polypeptide: Large ribosomal subunit protein uL30 (165 aa).

The protein belongs to the universal ribosomal protein uL30 family. Part of the 50S ribosomal subunit.

This chain is Large ribosomal subunit protein uL30, found in Thermoplasma volcanium (strain ATCC 51530 / DSM 4299 / JCM 9571 / NBRC 15438 / GSS1).